A 362-amino-acid chain; its full sequence is MTELLKTPIHPLYAKYGAKTIDFGGWDLPVQFAGIKAEHEAVRTDAGLFDVSHMGEILVEGPDSTSYLQYLLSNDIEKIKIGKAQYNIMCYETGGTVDDLVVYKKSETEYILVVNAANTEKDYEWMVQNIVGDVTVKNASSEFGQLALQGPNAEKILSKLTDADLSSISFFGFIEDADVAGVKTIISRSGYTGEDGFEIYMQSADAGKVFEAILAEGVAPIGLGARDTLRLEAVLALYGQELSKDITPLEAGLNFAVKLKKEADFIGKQALIKQKEAGLTRKLVGIELIERGIPRHDYPVFLNDKEIGVITSGTQSPTLGTNIGLALIDTAYTELDQELEVGIRNKKVKAKVVQTPFYKRAK.

It belongs to the GcvT family. In terms of assembly, the glycine cleavage system is composed of four proteins: P, T, L and H.

The enzyme catalyses N(6)-[(R)-S(8)-aminomethyldihydrolipoyl]-L-lysyl-[protein] + (6S)-5,6,7,8-tetrahydrofolate = N(6)-[(R)-dihydrolipoyl]-L-lysyl-[protein] + (6R)-5,10-methylene-5,6,7,8-tetrahydrofolate + NH4(+). The glycine cleavage system catalyzes the degradation of glycine. This is Aminomethyltransferase from Listeria innocua serovar 6a (strain ATCC BAA-680 / CLIP 11262).